The primary structure comprises 388 residues: Subtilisin-like serine protease AsES (388 aa).

Residues 1–15 (MRLSLVLALLPVAFG) form the signal peptide. A propeptide spans 16–105 (APTRRDEPAP…IEQDAIVTLA (90 aa)) (removed in mature form). Residues 114-388 (PWGLARISTR…RLAFNGNPSG (275 aa)) enclose the Peptidase S8 domain. C141 and C230 are oxidised to a cystine. Catalysis depends on charge relay system residues D146 and H176. N-linked (GlcNAc...) asparagine glycans are attached at residues N232 and N237. C285 and C357 form a disulfide bridge. The active-site Charge relay system is S331.

The protein belongs to the peptidase S8 family.

Its subcellular location is the secreted. With respect to regulation, the elicitor proteolytic activity is completely inhibited by PMSF. The activity is also significantly reduced by aprotinin (leading to 37% residual activity), by leupeptin (leading to 54% residual activity), by the ovomucoid trypsin inhibitor (leading to 65% residual activity), and by p-aminobenzamidine (leading to 26% residual activity). Extracellular elicitor protein that induces a strong defense response in strawberry and confers both local and systemic plant resistance against the fungal pathogen Colletotricum acutatum, the casual agent of anthracnose disease. AsES activates a cascade of defense responses, including calcium influx, oxidative burst, hypersensitive cell-death response (HR), accumulation of autofluorescent compounds, cell-wall reinforcement with callose and lignin deposition, salicylic acid accumulation, and expression of defense-related genes, such as PR1, PG1, MYB30, RBOH-D, RBOH-F, CHI23, and FLS. The oxidative burst consists in a progressive extracellular accumulation of H(2)O(2) that starts immediately after the contact with AsES and is preceded by a rapid and transient cell membrane depolarization. During this phase takes place also a rapid intracellular accumulation of NO at the chloroplasts. After the first extracellular H(2)O(2) production phase, two intracellular H(2)O(2) accumulation events occur, the first 2 hours after induction, and the second 7 hours after induction. AsES also produces a transient increase of ion leakage, and a progressive alkalinization of the extracellular medium. Confers also local and systemic plant resistance against Botrytis cinerea in Arabidopsis thaliana. Systemic, but not local resistance is dependent on the length of exposure to AsES. The protection to B.cinerea is due to the induction of the plant defenses via the salicylic acid, jasmonic acid and ethylene signaling pathways. Exhibits subtilisin-like proteolytic activity which is necessary but not sufficient for its elicitor function in strawberry plants. Probably induces defense by means of proteolysis of one or multiple host proteins that are specific targets of this protease. This chain is Subtilisin-like serine protease AsES, found in Sarocladium strictum (Black bundle disease fungus).